A 705-amino-acid polypeptide reads, in one-letter code: Polyribonucleotide nucleotidyltransferase (705 aa).

Mg(2+) contacts are provided by D486 and D492. Residues P553–I612 form the KH domain. The S1 motif domain occupies G622–K690.

This sequence belongs to the polyribonucleotide nucleotidyltransferase family. As to quaternary structure, component of the RNA degradosome, which is a multiprotein complex involved in RNA processing and mRNA degradation. It depends on Mg(2+) as a cofactor.

The protein resides in the cytoplasm. It carries out the reaction RNA(n+1) + phosphate = RNA(n) + a ribonucleoside 5'-diphosphate. In terms of biological role, involved in mRNA degradation. Catalyzes the phosphorolysis of single-stranded polyribonucleotides processively in the 3'- to 5'-direction. This is Polyribonucleotide nucleotidyltransferase from Teredinibacter turnerae (strain ATCC 39867 / T7901).